We begin with the raw amino-acid sequence, 481 residues long: Phosphoglucosamine mutase (481 aa).

Serine 129 serves as the catalytic Phosphoserine intermediate. Serine 129, aspartate 271, aspartate 273, and aspartate 275 together coordinate Mg(2+). Serine 129 is modified (phosphoserine).

This sequence belongs to the phosphohexose mutase family. The cofactor is Mg(2+). Activated by phosphorylation.

It catalyses the reaction alpha-D-glucosamine 1-phosphate = D-glucosamine 6-phosphate. Catalyzes the conversion of glucosamine-6-phosphate to glucosamine-1-phosphate. This chain is Phosphoglucosamine mutase, found in Picosynechococcus sp. (strain ATCC 27264 / PCC 7002 / PR-6) (Agmenellum quadruplicatum).